The sequence spans 390 residues: 3-ketoacyl-CoA thiolase (390 aa).

The Acyl-thioester intermediate role is filled by Cys95. Catalysis depends on proton acceptor residues His346 and Cys376.

It belongs to the thiolase-like superfamily. Thiolase family. Heterotetramer of two alpha chains (FadB) and two beta chains (FadA).

It localises to the cytoplasm. It carries out the reaction an acyl-CoA + acetyl-CoA = a 3-oxoacyl-CoA + CoA. The protein operates within lipid metabolism; fatty acid beta-oxidation. Catalyzes the final step of fatty acid oxidation in which acetyl-CoA is released and the CoA ester of a fatty acid two carbons shorter is formed. The polypeptide is 3-ketoacyl-CoA thiolase (Acinetobacter baumannii (strain AB307-0294)).